A 310-amino-acid chain; its full sequence is B3 domain-containing protein At4g02870 (310 aa).

Polar residues predominate over residues 1–21 (MTLSDDPISPSTQESSNSSYV). Residues 1-39 (MTLSDDPISPSTQESSNSSYVRSKEAEKNSPSQETDEEV) form a disordered region. The segment at residues 205–300 (RCGRLILQSS…RLQFGVISRN (96 aa)) is a DNA-binding region (TF-B3).

It is found in the nucleus. The sequence is that of B3 domain-containing protein At4g02870 (ARF42) from Arabidopsis thaliana (Mouse-ear cress).